The sequence spans 231 residues: Large ribosomal subunit protein uL1 (231 aa).

This sequence belongs to the universal ribosomal protein uL1 family. As to quaternary structure, part of the 50S ribosomal subunit.

In terms of biological role, binds directly to 23S rRNA. The L1 stalk is quite mobile in the ribosome, and is involved in E site tRNA release. Functionally, protein L1 is also a translational repressor protein, it controls the translation of the L11 operon by binding to its mRNA. This Staphylococcus epidermidis (strain ATCC 35984 / DSM 28319 / BCRC 17069 / CCUG 31568 / BM 3577 / RP62A) protein is Large ribosomal subunit protein uL1.